The sequence spans 136 residues: ATP synthase epsilon chain (136 aa).

A disordered region spans residues 100 to 120; it reads QGALEEANRGEDKPNQLKASN. Positions 105–114 are enriched in basic and acidic residues; it reads EANRGEDKPN.

This sequence belongs to the ATPase epsilon chain family. F-type ATPases have 2 components, CF(1) - the catalytic core - and CF(0) - the membrane proton channel. CF(1) has five subunits: alpha(3), beta(3), gamma(1), delta(1), epsilon(1). CF(0) has three main subunits: a, b and c.

The protein resides in the cellular thylakoid membrane. In terms of biological role, produces ATP from ADP in the presence of a proton gradient across the membrane. This is ATP synthase epsilon chain (atpC) from Synechocystis sp. (strain ATCC 27184 / PCC 6803 / Kazusa).